The sequence spans 115 residues: Large ribosomal subunit protein bL19 (115 aa).

This sequence belongs to the bacterial ribosomal protein bL19 family.

Functionally, this protein is located at the 30S-50S ribosomal subunit interface and may play a role in the structure and function of the aminoacyl-tRNA binding site. This chain is Large ribosomal subunit protein bL19, found in Pectobacterium atrosepticum (strain SCRI 1043 / ATCC BAA-672) (Erwinia carotovora subsp. atroseptica).